The sequence spans 116 residues: Phosphoribosyl-AMP cyclohydrolase (116 aa).

Asp-81 contributes to the Mg(2+) binding site. Cys-82 lines the Zn(2+) pocket. Mg(2+)-binding residues include Asp-83 and Asp-85. The Zn(2+) site is built by Cys-98 and Cys-105.

Belongs to the PRA-CH family. Homodimer. The cofactor is Mg(2+). It depends on Zn(2+) as a cofactor.

The protein resides in the cytoplasm. It catalyses the reaction 1-(5-phospho-beta-D-ribosyl)-5'-AMP + H2O = 1-(5-phospho-beta-D-ribosyl)-5-[(5-phospho-beta-D-ribosylamino)methylideneamino]imidazole-4-carboxamide. It participates in amino-acid biosynthesis; L-histidine biosynthesis; L-histidine from 5-phospho-alpha-D-ribose 1-diphosphate: step 3/9. In terms of biological role, catalyzes the hydrolysis of the adenine ring of phosphoribosyl-AMP. The protein is Phosphoribosyl-AMP cyclohydrolase of Mycolicibacterium vanbaalenii (strain DSM 7251 / JCM 13017 / BCRC 16820 / KCTC 9966 / NRRL B-24157 / PYR-1) (Mycobacterium vanbaalenii).